Reading from the N-terminus, the 194-residue chain is Cytochrome bo(3) ubiquinol oxidase subunit 3 (194 aa).

Residues 1–18 (MKKKYKIDTNIFSKELLG) lie on the Cytoplasmic side of the membrane. A helical transmembrane segment spans residues 19–41 (FWLYLMSDCIIFCTLFSVYFILV). The Extracellular portion of the chain corresponds to 42-55 (DNVAQGPSGHNIFQ). Residues 56-78 (NNLIIIETFLLLFSSFSCNLVLF) traverse the membrane as a helical segment. At 79–84 (EMKNKN) the chain is on the cytoplasmic side. The helical transmembrane segment at 85-107 (LYMVFLWLGITFLLGLLFVFLEL) threads the bilayer. The Extracellular segment spans residues 108–126 (FEFFHLINLGFGPTRSGFL). Residues 127–149 (SSFFVLIATHGIHVISGLIWIIV) form a helical membrane-spanning segment. The Cytoplasmic segment spans residues 150–169 (MIKYVYTFNITNLIYYRMLC). The helical transmembrane segment at 170-192 (LNLFWHFLDIVWVFIFSFVYLFG) threads the bilayer. Over 193–194 (MV) the chain is Extracellular.

Belongs to the cytochrome c oxidase subunit 3 family. In terms of assembly, heterooctamer of two A chains, two B chains, two C chains and two D chains.

Its subcellular location is the cell membrane. Functionally, cytochrome bo(3) ubiquinol terminal oxidase is the component of the aerobic respiratory chain of E.coli that predominates when cells are grown at high aeration. Has proton pump activity across the membrane in addition to electron transfer, pumping 2 protons/electron. This is Cytochrome bo(3) ubiquinol oxidase subunit 3 (cyoC) from Buchnera aphidicola subsp. Baizongia pistaciae (strain Bp).